A 79-amino-acid chain; its full sequence is Exodeoxyribonuclease 7 small subunit (79 aa).

This sequence belongs to the XseB family. As to quaternary structure, heterooligomer composed of large and small subunits.

It is found in the cytoplasm. The enzyme catalyses Exonucleolytic cleavage in either 5'- to 3'- or 3'- to 5'-direction to yield nucleoside 5'-phosphates.. Bidirectionally degrades single-stranded DNA into large acid-insoluble oligonucleotides, which are then degraded further into small acid-soluble oligonucleotides. The protein is Exodeoxyribonuclease 7 small subunit of Lactococcus lactis subsp. lactis (strain IL1403) (Streptococcus lactis).